The sequence spans 224 residues: 7-cyano-7-deazaguanine synthase (224 aa).

8–18 (LSGGMDSAAVI) is a binding site for ATP. Positions 186, 196, 199, and 202 each coordinate Zn(2+).

It belongs to the QueC family. Zn(2+) serves as cofactor.

The enzyme catalyses 7-carboxy-7-deazaguanine + NH4(+) + ATP = 7-cyano-7-deazaguanine + ADP + phosphate + H2O + H(+). It functions in the pathway purine metabolism; 7-cyano-7-deazaguanine biosynthesis. Catalyzes the ATP-dependent conversion of 7-carboxy-7-deazaguanine (CDG) to 7-cyano-7-deazaguanine (preQ(0)). The chain is 7-cyano-7-deazaguanine synthase from Xanthomonas oryzae pv. oryzae (strain MAFF 311018).